The primary structure comprises 356 residues: Glutamine synthetase (356 aa).

Residues 19 to 99 (VIAEYIWIGG…VICDTYTPAG (81 aa)) form the GS beta-grasp domain. Residues 106 to 356 (KRHGAAKIFS…IAETTLLWKP (251 aa)) enclose the GS catalytic domain.

This sequence belongs to the glutamine synthetase family. In terms of assembly, homooctamer. In terms of tissue distribution, found at highest levels in root nodules.

The protein localises to the cytoplasm. The catalysed reaction is L-glutamate + NH4(+) + ATP = L-glutamine + ADP + phosphate + H(+). The sequence is that of Glutamine synthetase (GLN1) from Alnus glutinosa (European alder).